Here is a 289-residue protein sequence, read N- to C-terminus: Acetyl-coenzyme A carboxylase carboxyl transferase subunit beta (289 aa).

Residues 24–289 (LWTNCESCGQ…RQKTVSDAAA (266 aa)) enclose the CoA carboxyltransferase N-terminal domain. Zn(2+) is bound by residues Cys-28, Cys-31, Cys-47, and Cys-50. The segment at 28 to 50 (CESCGQMMLTKELERSEKVCPHC) adopts a C4-type zinc-finger fold.

Belongs to the AccD/PCCB family. In terms of assembly, acetyl-CoA carboxylase is a heterohexamer composed of biotin carboxyl carrier protein (AccB), biotin carboxylase (AccC) and two subunits each of ACCase subunit alpha (AccA) and ACCase subunit beta (AccD). Zn(2+) is required as a cofactor.

Its subcellular location is the cytoplasm. The catalysed reaction is N(6)-carboxybiotinyl-L-lysyl-[protein] + acetyl-CoA = N(6)-biotinyl-L-lysyl-[protein] + malonyl-CoA. The protein operates within lipid metabolism; malonyl-CoA biosynthesis; malonyl-CoA from acetyl-CoA: step 1/1. Its function is as follows. Component of the acetyl coenzyme A carboxylase (ACC) complex. Biotin carboxylase (BC) catalyzes the carboxylation of biotin on its carrier protein (BCCP) and then the CO(2) group is transferred by the transcarboxylase to acetyl-CoA to form malonyl-CoA. This Gluconobacter oxydans (strain 621H) (Gluconobacter suboxydans) protein is Acetyl-coenzyme A carboxylase carboxyl transferase subunit beta.